The sequence spans 346 residues: KH domain-containing, RNA-binding, signal transduction-associated protein 2 (346 aa).

A KH domain is found at 65 to 131 (LIPVQQYPKF…AKYAHLSNDL (67 aa)). The segment at 175–291 (LSYLNGSDDP…SYESYDDNYS (117 aa)) is disordered. Over residues 195-224 (LRLTSTASPRGRGSAAPPAPPGRGAAAPRG) the composition is skewed to low complexity. The segment covering 268 to 287 (YGYDDGYDGEYDDQSYESYD) has biased composition (acidic residues).

The protein belongs to the KHDRBS family.

It is found in the nucleus. Its function is as follows. RNA-binding protein that plays a role in the regulation of alternative splicing. This is KH domain-containing, RNA-binding, signal transduction-associated protein 2 (khdrbs2) from Danio rerio (Zebrafish).